The following is a 388-amino-acid chain: Ribonuclease D (388 aa).

Residues 24 to 191 form the 3'-5' exonuclease domain; it reads QYVSDEASLN…LYPQLADKLK (168 aa). The 81-residue stretch at 230–310 folds into the HRDC domain; it reads TEHQLAYLKV…QTADLSNPPE (81 aa).

The protein belongs to the RNase D family. A divalent metal cation serves as cofactor.

It is found in the cytoplasm. The catalysed reaction is Exonucleolytic cleavage that removes extra residues from the 3'-terminus of tRNA to produce 5'-mononucleotides.. Exonuclease involved in the 3' processing of various precursor tRNAs. Initiates hydrolysis at the 3'-terminus of an RNA molecule and releases 5'-mononucleotides. This Shewanella sp. (strain ANA-3) protein is Ribonuclease D.